Consider the following 105-residue polypeptide: Insulin (105 aa).

Positions 1-24 are cleaved as a signal peptide; the sequence is MALWTRLVPLLALLALWAPAPAHA. 3 disulfide bridges follow: Cys-31–Cys-91, Cys-43–Cys-104, and Cys-90–Cys-95. Residues 57–82 constitute a propeptide, c peptide; sequence EVEGPQVGALELAGGPGAGGLEGPPQ.

This sequence belongs to the insulin family. Heterodimer of a B chain and an A chain linked by two disulfide bonds.

It localises to the secreted. Insulin decreases blood glucose concentration. It increases cell permeability to monosaccharides, amino acids and fatty acids. It accelerates glycolysis, the pentose phosphate cycle, and glycogen synthesis in liver. This is Insulin (INS) from Ovis aries (Sheep).